The chain runs to 474 residues: MTAPRTPRKAFGRLSLPERTYLADALRTETVGGVLLLVAAIAALVWANIPALHDSYESVSHFHFGPAALGLNLSVAHWAADGLLAIFFFVAGIELKRELVAGDLKDPKAAALPVVAALCGMVVPAVVYTVTSTAGGGSLSGWAVPTATDIAFALAVLAVIGTSLPSALRAFLLTLAVVDDLFAILIIAVFFTETLNFAALGGAVVGLAVFWLLLRKGVRGWYVYVPLGLVIWALMYNSGVHATIAGVAMGLMLRCHRREGEDHSPGEHIEHLVRPLSAGLAVPLFALFSAGVAITGGALADVFTKPETLGVVLGLVVGKTLGIFGGTWLTSRFTRASLSDDLQWADVFAVATLAGIGFTVSLLIGELAFEDDAAMTSEVKAAVLTGSLIAAALATVLLKIRNAKYRGMVAEEERDDDLSGVPDIYEEDDPAYHLRVAAIYEKKAAEHRRIAEEMESARLAEVAGGAGDEGDGPA.

Transmembrane regions (helical) follow at residues 31 to 51 (VGGV…NIPA), 73 to 93 (LSVA…VAGI), 110 to 130 (AALP…VYTV), 141 to 161 (GWAV…AVIG), 171 to 191 (FLLT…AVFF), 194 to 214 (TLNF…WLLL), 220 to 240 (GWYV…NSGV), 280 to 300 (LAVP…GALA), 309 to 329 (LGVV…GTWL), 347 to 367 (VFAV…IGEL), and 378 to 398 (EVKA…TVLL).

Belongs to the NhaA Na(+)/H(+) (TC 2.A.33) antiporter family.

The protein resides in the cell membrane. The enzyme catalyses Na(+)(in) + 2 H(+)(out) = Na(+)(out) + 2 H(+)(in). Functionally, na(+)/H(+) antiporter that extrudes sodium in exchange for external protons. This Streptomyces coelicolor (strain ATCC BAA-471 / A3(2) / M145) protein is Na(+)/H(+) antiporter NhaA 3.